We begin with the raw amino-acid sequence, 154 residues long: Universal stress protein Sll1388 (154 aa).

It belongs to the universal stress protein A family.

This is Universal stress protein Sll1388 from Synechocystis sp. (strain ATCC 27184 / PCC 6803 / Kazusa).